Reading from the N-terminus, the 444-residue chain is MIETSQTIPELVSWAKDREFSLNLPTERLVFLLAIAIYNNERLDGEMLEADLVDIFRHTMNAFEQSTDAIATRANNAINELVKQRLLNRFSSEFTEGLAIYRLTPLGVGVSDYYIRQREFSALRLSVQLSIVADEIQRASDSAEEGVENNESEHYWRRNVFAPLKYSVAEIFDSIDLSQRIMDENQQSIKDEIAELLTKDWQAAISSCERLLDETSGNLRELQDTLNAAGDKLQAQLLRIQDCVIGRDDLYFIDQLITDLQSKLDRIISWGQQAIDLWIGYDRHVHKFIRTAIDMDKNRVFSQRLRNSIHNYFEHPWFLWTAQAERLVDLRDEEMVLREDDALGELPEELQYESLSDLHDQIVEHMQDLLIAYRENNRPIDLSLVLKEQLENYPLSRHFDVARIIVDQAVRLGMANDDLSGIYPDWQVINKRGAEVQAHVIDKY.

Residues 212-240 (LDETSGNLRELQDTLNAAGDKLQAQLLRI) are leucine-zipper.

It belongs to the MukF family. As to quaternary structure, interacts, and probably forms a ternary complex, with MukE and MukB via its C-terminal region. The complex formation is stimulated by calcium or magnesium. It is required for an interaction between MukE and MukB.

It is found in the cytoplasm. The protein resides in the nucleoid. Functionally, involved in chromosome condensation, segregation and cell cycle progression. May participate in facilitating chromosome segregation by condensation DNA from both sides of a centrally located replisome during cell division. Not required for mini-F plasmid partitioning. Probably acts via its interaction with MukB and MukE. Overexpression results in anucleate cells. It has a calcium binding activity. The protein is Chromosome partition protein MukF of Haemophilus influenzae (strain PittEE).